Here is a 1215-residue protein sequence, read N- to C-terminus: DNA-directed RNA polymerase subunit beta' (1215 aa).

Residues Cys-60, Cys-62, Cys-75, and Cys-78 each contribute to the Zn(2+) site. Asp-449, Asp-451, and Asp-453 together coordinate Mg(2+). 4 residues coordinate Zn(2+): Cys-818, Cys-892, Cys-899, and Cys-902.

The protein belongs to the RNA polymerase beta' chain family. The RNAP catalytic core consists of 2 alpha, 1 beta, 1 beta' and 1 omega subunit. When a sigma factor is associated with the core the holoenzyme is formed, which can initiate transcription. Requires Mg(2+) as cofactor. Zn(2+) is required as a cofactor.

It carries out the reaction RNA(n) + a ribonucleoside 5'-triphosphate = RNA(n+1) + diphosphate. DNA-dependent RNA polymerase catalyzes the transcription of DNA into RNA using the four ribonucleoside triphosphates as substrates. In Limosilactobacillus fermentum (strain NBRC 3956 / LMG 18251) (Lactobacillus fermentum), this protein is DNA-directed RNA polymerase subunit beta'.